Reading from the N-terminus, the 231-residue chain is MPQLEASLELDFQSESYKDAYSRINAIVIEGEQEAFDNYNRLAEMLPDQRDELHKLAKMEQRHMKGFMACGKNLSVTPDMGFAQKFFERLHENFKAAAAEGKVVTCLLIQSLIIECFAIAAYNIYIPVADAFARKITEGVVRDEYLHRNFGEEWLKANFDASKAELEEANRQNLPLVWLMLNEVADDARELGMERESLVEDFMIAYGEALENIGFTTREIMRMSAYGLAAV.

Positions 32, 60, 63, 115, and 147 each coordinate Fe cation.

It belongs to the aldehyde decarbonylase family. It depends on Binds 2 metal cations per subunit. The catalytic dinuclear metal-binding site could be either a di-iron or a manganese-iron cofactor. as a cofactor.

The enzyme catalyses a long-chain fatty aldehyde + 2 NADPH + O2 + H(+) = a long-chain alkane + formate + 2 NADP(+) + H2O. In terms of biological role, catalyzes the decarbonylation of fatty aldehydes to alkanes. Requires the presence of ferredoxin, ferredoxin reductase and NADPH for in vitro decarbonylase activity. Involved in the biosynthesis of alkanes, mainly heptadecane and pentadecane. The chain is Aldehyde decarbonylase from Synechococcus elongatus (strain ATCC 33912 / PCC 7942 / FACHB-805) (Anacystis nidulans R2).